We begin with the raw amino-acid sequence, 441 residues long: Ribosomal protein uS12 methylthiotransferase RimO (441 aa).

The MTTase N-terminal domain occupies 8–118 (PKIGFVSLGC…VLEHVHHYTP (111 aa)). C17, C53, C82, C150, C154, and C157 together coordinate [4Fe-4S] cluster. Residues 136–373 (LTPRHYAYLK…MQLQQQISAE (238 aa)) enclose the Radical SAM core domain. Residues 376–441 (QEKVGREILV…DEYDLWGTRV (66 aa)) form the TRAM domain.

Belongs to the methylthiotransferase family. RimO subfamily. The cofactor is [4Fe-4S] cluster.

The protein localises to the cytoplasm. It catalyses the reaction L-aspartate(89)-[ribosomal protein uS12]-hydrogen + (sulfur carrier)-SH + AH2 + 2 S-adenosyl-L-methionine = 3-methylsulfanyl-L-aspartate(89)-[ribosomal protein uS12]-hydrogen + (sulfur carrier)-H + 5'-deoxyadenosine + L-methionine + A + S-adenosyl-L-homocysteine + 2 H(+). Its function is as follows. Catalyzes the methylthiolation of an aspartic acid residue of ribosomal protein uS12. The sequence is that of Ribosomal protein uS12 methylthiotransferase RimO from Klebsiella pneumoniae subsp. pneumoniae (strain ATCC 700721 / MGH 78578).